A 423-amino-acid chain; its full sequence is MSTRYHQAASDSYLELLKEATKRDLNLSDEDGMTPTLLAAYHGNLEALEIICSRGGDPDKCDIWGNTPLHYAASNGHTHCISFLVNFGANIFALDNDLKSPLDAAASREQKECVALLDKAATVQNTMNPKRVTRLKEQALKNARKQMKECERLQERHQNKMARTYSKEDSGTISSSHSTLSRSFLSTTSAGRFGSLSKGIKDTFKIKSKKNKDTTEQLEKDGRSGQRPVMEVFREEEEDSFPKDFKEKLHFSVEEDDDVQHESILNRPGLGSIVFSRNRVLDFEDISDSKRELGFKMPSELFQRQGAAGTVEEEEEEEEEEEEEKREANGTAGDLPWDEEEVEWEEDAVDATPLEVFLQSQHLEEFLPIFMREQIDLEALLLCSDEDLQNIHMQLGPRKKVLSAIDKRKQVLQQPGQLVDTSL.

The mediates localization to microvilli stretch occupies residues 1–251 (MSTRYHQAAS…PKDFKEKLHF (251 aa)). ANK repeat units follow at residues 31-60 (DGMTPTLLAAYHGNLEALEIICSRGGDPDK), 64-93 (WGNTPLHYAASNGHTHCISFLVNFGANIFA), and 97-126 (DLKSPLDAAASREQKECVALLDKAATVQNT). Positions 130-169 (KRVTRLKEQALKNARKQMKECERLQERHQNKMARTYSKED) form a coiled coil. Disordered stretches follow at residues 158–181 (QNKMARTYSKEDSGTISSSHSTLS), 207–227 (KSKKNKDTTEQLEKDGRSGQR), and 303–335 (QRQGAAGTVEEEEEEEEEEEEEKREANGTAGDL). A compositionally biased stretch (low complexity) spans 171 to 181 (GTISSSHSTLS). Over residues 207–224 (KSKKNKDTTEQLEKDGRS) the composition is skewed to basic and acidic residues. Residues 253 to 352 (VEEDDDVQHE…EWEEDAVDAT (100 aa)) form a mediates interaction with MYO7B region. Residues 301-335 (LFQRQGAAGTVEEEEEEEEEEEEEKREANGTAGDL) adopt a coiled-coil conformation. The span at 311 to 324 (VEEEEEEEEEEEEE) shows a compositional bias: acidic residues. One can recognise an SAM domain in the interval 357–409 (FLQSQHLEEFLPIFMREQIDLEALLLCSDEDLQNIHMQLGPRKKVLSAIDKRK). Positions 421–423 (TSL) match the PDZ-binding; mediates interaction with USH1C motif.

As to quaternary structure, part of the IMAC/intermicrovillar adhesion complex/intermicrovillar tip-link complex composed of ANKS4B, MYO7B, USH1C, CDHR2 and CDHR5. Interacts with USH1C; the interaction is direct and is required for ANKS4B localization to the tip of microvilli. Interacts with MYO7B; the interaction is direct. May interact with HSPA5. In terms of tissue distribution, cochlea, kidney, lung, liver, pancreas, salivary gland and small intestine (at protein level). Expressed in kidney, small intestine, pancreas, liver and colon. Not detected in heart, spleen and brain.

It localises to the cell projection. The protein resides in the microvillus. In terms of biological role, as part of the intermicrovillar adhesion complex/IMAC plays a role in epithelial brush border differentiation, controlling microvilli organization and length. Plays a role in assembly of the complex. May play a role in cellular response to endoplasmic reticulum stress. The sequence is that of Ankyrin repeat and SAM domain-containing protein 4B from Mus musculus (Mouse).